We begin with the raw amino-acid sequence, 492 residues long: Bifunctional purine biosynthesis protein PurH (492 aa).

An MGS-like domain is found at 1–144 (MKKAILSVSN…KNYKHVTTIV (144 aa)).

Belongs to the PurH family.

The enzyme catalyses (6R)-10-formyltetrahydrofolate + 5-amino-1-(5-phospho-beta-D-ribosyl)imidazole-4-carboxamide = 5-formamido-1-(5-phospho-D-ribosyl)imidazole-4-carboxamide + (6S)-5,6,7,8-tetrahydrofolate. It catalyses the reaction IMP + H2O = 5-formamido-1-(5-phospho-D-ribosyl)imidazole-4-carboxamide. It participates in purine metabolism; IMP biosynthesis via de novo pathway; 5-formamido-1-(5-phospho-D-ribosyl)imidazole-4-carboxamide from 5-amino-1-(5-phospho-D-ribosyl)imidazole-4-carboxamide (10-formyl THF route): step 1/1. Its pathway is purine metabolism; IMP biosynthesis via de novo pathway; IMP from 5-formamido-1-(5-phospho-D-ribosyl)imidazole-4-carboxamide: step 1/1. This chain is Bifunctional purine biosynthesis protein PurH, found in Staphylococcus aureus (strain Newman).